A 266-amino-acid polypeptide reads, in one-letter code: Auxin-responsive protein IAA21 (266 aa).

The EAR-like (transcriptional repression) motif lies at L24 to L28. A disordered region spans residues G27–L50. Positions C146–G248 constitute a PB1 domain.

The protein belongs to the Aux/IAA family. Homodimers and heterodimers. As to expression, highly expressed in flowers. Expressed in roots and seedlings.

Its subcellular location is the nucleus. In terms of biological role, aux/IAA proteins are short-lived transcriptional factors that function as repressors of early auxin response genes at low auxin concentrations. The chain is Auxin-responsive protein IAA21 (IAA21) from Oryza sativa subsp. japonica (Rice).